The following is a 404-amino-acid chain: Lipase lipl-3 (404 aa).

Positions 1–20 (MCSSLCALLLVILAVHNVHA) are cleaved as a signal peptide. An N-linked (GlcNAc...) asparagine glycan is attached at Asn65. Ser168 acts as the Nucleophile in catalysis. Asn272 carries an N-linked (GlcNAc...) asparagine glycan. Residues Asp344 and His376 each act as charge relay system in the active site.

It belongs to the AB hydrolase superfamily. Lipase family.

Its subcellular location is the secreted. The protein resides in the lysosome lumen. In terms of biological role, lipase that, together with lipl-1, plays a role in the response to nutrient deprivation by controlling lipid metabolism. Specifically, involved in the breakdown of lipids during lipophagy, a process during which lipids contained in lipid droplets that have been delivered to lysosomes by autophagy are degraded. The polypeptide is Lipase lipl-3 (Caenorhabditis elegans).